Reading from the N-terminus, the 1382-residue chain is Insulin receptor (1382 aa).

Residues 1 to 27 (MATGGRRGAAAAPLLVAVAALLLGAAG) form the signal peptide. Extracellular loops occupy residues 28–758 (HLYP…PRPS) and 763–956 (SLGD…NIAK). A disulfide bridge links Cys-35 with Cys-53. N-linked (GlcNAc...) asparagine glycosylation is found at Asn-43, Asn-52, Asn-105, and Asn-138. Disulfide bonds link Cys-153–Cys-182, Cys-186–Cys-209, Cys-196–Cys-215, Cys-219–Cys-228, Cys-223–Cys-234, Cys-235–Cys-243, Cys-239–Cys-252, Cys-255–Cys-264, and Cys-268–Cys-280. An N-linked (GlcNAc...) asparagine glycan is attached at Asn-242. Asn-282 carries N-linked (GlcNAc...) asparagine glycosylation. Disulfide bonds link Cys-286-Cys-311, Cys-293-Cys-301, Cys-315-Cys-328, Cys-331-Cys-335, and Cys-339-Cys-360. N-linked (GlcNAc...) asparagine glycosylation is present at Asn-322. Residue Asn-364 is glycosylated (N-linked (GlcNAc...) asparagine). Ser-400 carries the phosphoserine modification. Tyr-401 is modified (phosphotyrosine). Ser-407 bears the Phosphoserine mark. Asn-424 and Asn-445 each carry an N-linked (GlcNAc...) asparagine glycan. A disulfide bridge connects residues Cys-462 and Cys-495. Asn-541, Asn-633, Asn-651, and Asn-698 each carry an N-linked (GlcNAc...) asparagine glycan. In terms of domain architecture, Fibronectin type-III 1 spans 624-726 (VPLDPISVSN…SQILKELEES (103 aa)). Cystine bridges form between Cys-674–Cys-899 and Cys-825–Cys-834. A disordered region spans residues 686–708 (SPPFESEDSQKHNQSEYEDSAGE). An insulin-binding region spans residues 733–741 (EDYLHNVVF). Residues 746–766 (TSSGTGAEDPRPSRKRRSLGD) form a disordered region. Fibronectin type-III domains are found at residues 757-842 (PSRK…YVSA) and 853-947 (IVGP…VTDY). Residues Asn-769 and Asn-782 are each glycosylated (N-linked (GlcNAc...) asparagine). Residues Asn-920 and Asn-933 are each glycosylated (N-linked (GlcNAc...) asparagine). A helical membrane pass occupies residues 957–979 (IIIGPLIFVFLFSVVIGSIYLFL). Topologically, residues 980-1382 (RKRQPDGPLG…ILTLPRSNPS (403 aa)) are cytoplasmic. Phosphotyrosine; by autocatalysis occurs at positions 992, 999, and 1011. Position 999 (Tyr-999) is a region of interest, important for interaction with IRS1, SHC1 and STAT5B. Residues 1023–1298 (ITLLRELGQG…LLKDDLHPSF (276 aa)) enclose the Protein kinase domain. Residues Ser-1033 and Lys-1057 each contribute to the ATP site. Lys-1079 is covalently cross-linked (Glycyl lysine isopeptide (Lys-Gly) (interchain with G-Cter in ubiquitin)). S-nitrosocysteine is present on Cys-1083. 1104-1110 (ELMAHGD) is a binding site for ATP. The Proton donor/acceptor role is filled by Asp-1159. Residues 1163-1164 (RN) and Asp-1177 each bind ATP. 5 positions are modified to phosphotyrosine; by autocatalysis: Tyr-1185, Tyr-1189, Tyr-1190, Tyr-1355, and Tyr-1361. A disordered region spans residues 1360–1382 (PYTHMNGGKKNGRILTLPRSNPS). The interval 1361–1364 (YTHM) is PIK3R1-binding.

The protein belongs to the protein kinase superfamily. Tyr protein kinase family. Insulin receptor subfamily. Tetramer of 2 alpha and 2 beta chains linked by disulfide bonds. The alpha chains carry the insulin-binding regions, while the beta chains carry the kinase domain. Forms a hybrid receptor with IGF1R, the hybrid is a tetramer consisting of 1 alpha chain and 1 beta chain of INSR and 1 alpha chain and 1 beta chain of IGF1R. Interacts with SORBS1 but dissociates from it following insulin stimulation. Binds SH2B2. Activated form of INSR interacts (via Tyr-999) with the PTB/PID domains of IRS1 and SHC1. The sequences surrounding the phosphorylated NPXY motif contribute differentially to either IRS1 or SHC1 recognition. Interacts (via tyrosines in the C-terminus) with IRS2 (via PTB domain and 591-786 AA); the 591-786 would be the primary anchor of IRS2 to INSR while the PTB domain would have a stabilizing action on the interaction with INSR. Interacts with the SH2 domains of the 85 kDa regulatory subunit of PI3K (PIK3R1) in vitro, when autophosphorylated on tyrosine residues. Interacts with SOCS7. Interacts (via the phosphorylated Tyr-999), with SOCS3. Interacts (via the phosphorylated Tyr-1185, Tyr-1189, Tyr-1190) with SOCS1. Interacts with CAV2 (tyrosine-phosphorylated form); the interaction is increased with 'Tyr-27'phosphorylation of CAV2. Interacts with ARRB2. Interacts with GRB10; this interaction blocks the association between IRS1/IRS2 and INSR, significantly reduces insulin-stimulated tyrosine phosphorylation of IRS1 and IRS2 and thus decreases insulin signaling. Interacts with GRB7. Interacts with PDPK1. Interacts (via Tyr-1190) with GRB14 (via BPS domain); this interaction protects the tyrosines in the activation loop from dephosphorylation, but promotes dephosphorylation of Tyr-999, this results in decreased interaction with, and phosphorylation of, IRS1. Interacts (via subunit alpha) with ENPP1 (via 485-599 AA); this interaction blocks autophosphorylation. Interacts with PTPRE; this interaction is dependent of Tyr-1185, Tyr-1189 and Tyr-1190 of the INSR. Interacts with STAT5B (via SH2 domain). Interacts with PTPRF. Interacts with ATIC; ATIC together with PRKAA2/AMPK2 and HACD3/PTPLAD1 is proposed to be part of a signaling netwok regulating INSR autophosphorylation and endocytosis. Interacts with the cone snail venom insulin Con-Ins G1. Interacts with the insulin receptor SORL1; this interaction strongly increases its surface exposure, hence strengthens insulin signal reception. Interacts (tyrosine phosphorylated) with CCDC88A/GIV (via SH2-like region); binding requires autophosphorylation of the INSR C-terminal region. Interacts with GNAI3; the interaction is probably mediated by CCDC88A/GIV. Interacts with LMBRD1. Interacts (in response to insulin stimulation) with NCK1; this interaction may recruit PTPN1 to mediate INSR dephosphorylation. Interacts with CD248; this interaction diminishes INSR autophosphorylation. Post-translationally, after being transported from the endoplasmic reticulum to the Golgi apparatus, the single glycosylated precursor is further glycosylated and then cleaved, followed by its transport to the plasma membrane. In terms of processing, autophosphorylated on tyrosine residues in response to insulin. Phosphorylation of Tyr-999 is required for binding to IRS1, SHC1 and STAT5B. Dephosphorylated by PTPRE at Tyr-999, Tyr-1185, Tyr-1189 and Tyr-1190. May also be phosphorylated at Tyr-1185 and Tyr-1190 by mTORC2. Dephosphorylated by PTPRF and PTPN1. Dephosphorylated by PTPN2; down-regulates insulin-induced signaling. Dephosphorylation at Tyr-1189 and Tyr-1190 requires the SH2/SH3 adapter protein NCK1, probably to recruit its interaction partner PTPN1. S-nitrosylation at Cys-1083 by BLVRB inhibits the receptor tyrosine kinase, thereby inhibiting insulin signaling. Post-translationally, ubiquitinated by MARCHF1; leading to degradation thereby reducing surface INSR expression. In terms of tissue distribution, isoform Long and isoform Short are predominantly expressed in tissue targets of insulin metabolic effects: liver, adipose tissue and skeletal muscle but are also expressed in the peripheral nerve, kidney, pulmonary alveoli, pancreatic acini, placenta vascular endothelium, fibroblasts, monocytes, granulocytes, erythrocytes and skin. Isoform Short is preferentially expressed in fetal cells such as fetal fibroblasts, muscle, liver and kidney. Found as a hybrid receptor with IGF1R in muscle, heart, kidney, adipose tissue, skeletal muscle, hepatoma, fibroblasts, spleen and placenta (at protein level). Overexpressed in several tumors, including breast, colon, lung, ovary, and thyroid carcinomas.

It is found in the cell membrane. The protein resides in the late endosome. Its subcellular location is the lysosome. The catalysed reaction is L-tyrosyl-[protein] + ATP = O-phospho-L-tyrosyl-[protein] + ADP + H(+). Activated in response to insulin. Autophosphorylation activates the kinase activity. PTPN1, PTPRE and PTPRF dephosphorylate important tyrosine residues, thereby reducing INSR activity. Inhibited by ENPP1. GRB10 and GRB14 inhibit the catalytic activity of the INSR, they block access of substrates to the activated receptor. SOCS1 and SOCS3 act as negative regulators of INSR activity, they bind to the activated INRS and interfere with the phosphorylation of INSR substrates. Its function is as follows. Receptor tyrosine kinase which mediates the pleiotropic actions of insulin. Binding of insulin leads to phosphorylation of several intracellular substrates, including, insulin receptor substrates (IRS1, 2, 3, 4), SHC, GAB1, CBL and other signaling intermediates. Each of these phosphorylated proteins serve as docking proteins for other signaling proteins that contain Src-homology-2 domains (SH2 domain) that specifically recognize different phosphotyrosine residues, including the p85 regulatory subunit of PI3K and SHP2. Phosphorylation of IRSs proteins lead to the activation of two main signaling pathways: the PI3K-AKT/PKB pathway, which is responsible for most of the metabolic actions of insulin, and the Ras-MAPK pathway, which regulates expression of some genes and cooperates with the PI3K pathway to control cell growth and differentiation. Binding of the SH2 domains of PI3K to phosphotyrosines on IRS1 leads to the activation of PI3K and the generation of phosphatidylinositol-(3, 4, 5)-triphosphate (PIP3), a lipid second messenger, which activates several PIP3-dependent serine/threonine kinases, such as PDPK1 and subsequently AKT/PKB. The net effect of this pathway is to produce a translocation of the glucose transporter SLC2A4/GLUT4 from cytoplasmic vesicles to the cell membrane to facilitate glucose transport. Moreover, upon insulin stimulation, activated AKT/PKB is responsible for: anti-apoptotic effect of insulin by inducing phosphorylation of BAD; regulates the expression of gluconeogenic and lipogenic enzymes by controlling the activity of the winged helix or forkhead (FOX) class of transcription factors. Another pathway regulated by PI3K-AKT/PKB activation is mTORC1 signaling pathway which regulates cell growth and metabolism and integrates signals from insulin. AKT mediates insulin-stimulated protein synthesis by phosphorylating TSC2 thereby activating mTORC1 pathway. The Ras/RAF/MAP2K/MAPK pathway is mainly involved in mediating cell growth, survival and cellular differentiation of insulin. Phosphorylated IRS1 recruits GRB2/SOS complex, which triggers the activation of the Ras/RAF/MAP2K/MAPK pathway. In addition to binding insulin, the insulin receptor can bind insulin-like growth factors (IGFI and IGFII). Isoform Short has a higher affinity for IGFII binding. When present in a hybrid receptor with IGF1R, binds IGF1. PubMed:12138094 shows that hybrid receptors composed of IGF1R and INSR isoform Long are activated with a high affinity by IGF1, with low affinity by IGF2 and not significantly activated by insulin, and that hybrid receptors composed of IGF1R and INSR isoform Short are activated by IGF1, IGF2 and insulin. In contrast, PubMed:16831875 shows that hybrid receptors composed of IGF1R and INSR isoform Long and hybrid receptors composed of IGF1R and INSR isoform Short have similar binding characteristics, both bind IGF1 and have a low affinity for insulin. In adipocytes, inhibits lipolysis. This chain is Insulin receptor (INSR), found in Homo sapiens (Human).